A 75-amino-acid chain; its full sequence is Brevinin-2SN2 (75 aa).

Residues 1–22 form the signal peptide; it reads MFTLKKPLLFLFFLGTISLSFC. A propeptide spans 23 to 40 (removed in mature form); the sequence is EEERGADEDDGGEMTEEE. A disulfide bridge connects residues C69 and C75.

Belongs to the frog skin active peptide (FSAP) family. Brevinin subfamily. In terms of tissue distribution, expressed by the skin glands.

It localises to the secreted. Functionally, antimicrobial peptide. Active against some Gram-negative and a variety of Gram-positive bacterial strains. Active against fungus C.glabrata 090902 but not against C.albicans ATCC 10231. Shows hemolytic activity against human erythrocytes. The sequence is that of Brevinin-2SN2 from Sylvirana spinulosa (Fine-spined frog).